A 369-amino-acid chain; its full sequence is S-(hydroxymethyl)glutathione dehydrogenase (369 aa).

Positions 40, 62, 92, 95, 98, 106, and 169 each coordinate Zn(2+).

Belongs to the zinc-containing alcohol dehydrogenase family. Class-III subfamily. As to quaternary structure, homodimer. The cofactor is Zn(2+).

It localises to the cytoplasm. It catalyses the reaction S-(hydroxymethyl)glutathione + NADP(+) = S-formylglutathione + NADPH + H(+). The catalysed reaction is S-(hydroxymethyl)glutathione + NAD(+) = S-formylglutathione + NADH + H(+). The enzyme catalyses a primary alcohol + NAD(+) = an aldehyde + NADH + H(+). It carries out the reaction a secondary alcohol + NAD(+) = a ketone + NADH + H(+). It catalyses the reaction S-nitrosoglutathione + NADH + H(+) = S-(hydroxysulfenamide)glutathione + NAD(+). Its function is as follows. Has high formaldehyde dehydrogenase activity in the presence of glutathione and catalyzes the oxidation of normal alcohols in a reaction that is not GSH-dependent. In addition, hemithiolacetals other than those formed from GSH, including omega-thiol fatty acids, also are substrates. Also acts as a S-nitroso-glutathione reductase by catalyzing the NADH-dependent reduction of S-nitrosoglutathione. The protein is S-(hydroxymethyl)glutathione dehydrogenase (frmA) of Escherichia coli (strain SMS-3-5 / SECEC).